Reading from the N-terminus, the 479-residue chain is MTKEQILAEHIIDAVGGIDNMDNIINCMTRVRIKVLDEDKIDYEQLKSIKGVMGVVKDDRVQVVVGPGTVNKVASHMSELSGAPLGETIKHKSKDYRANAEAQAQANKSEFQSKQKRGKFNKLLKTIANIFIPLIPAFIGAGLIGGIAAVLSNLLAAGQISGEWVTQLVTVFNVIKDGMLAYLAIFTGINAAKEFGATPGLGGVIGGTTLLTGLTDKNMITNIFTGEPLQPGQGGIIGVIFAVWLLSIIEKRLHKIVPNSIDIIVTPTITLFIIGLLTIFIFMPLAGFVSDGLVTVINGIIDIGGVFSGFIIGAFFLPLVMLGLHHMFTPIHIEMINQTGATYLLPIAAMAGAGQVGAALALWVRCRKNTTLRDTLKGALPVGFLGIGEPLIYGVTLPLGKPFITACIGGGIGGAVIGGIGHIGATAIGPSGISLLPLISDHMYLGYIAGLLVAYAGGFIFTYFFGTTKAMRESDTLGD.

A PTS EIIB type-1 domain is found at 5–87; it reads QILAEHIIDA…SELSGAPLGE (83 aa). The active-site Phosphocysteine intermediate; for EIIB activity is the Cys-27. The PTS EIIC type-1 domain occupies 125–479; the sequence is KTIANIFIPL…AMRESDTLGD (355 aa). The next 10 membrane-spanning stretches (helical) occupy residues 130 to 150, 169 to 189, 195 to 215, 229 to 249, 269 to 289, 303 to 323, 344 to 364, 379 to 399, 403 to 423, and 445 to 465; these read IFIP…IAAV, VTVF…FTGI, FGAT…TGLT, LQPG…LSII, ITLF…AGFV, IGGV…VMLG, LLPI…ALWV, ALPV…TLPL, FITA…IGHI, and LGYI…TYFF.

It localises to the cell membrane. The catalysed reaction is N-acetyl-beta-D-muramate-(1-&gt;4)-N-acetyl-D-glucosamine(out) + N(pros)-phospho-L-histidyl-[protein] = 6-phospho-N-acetyl-beta-D-muramate-(1-&gt;4)-N-acetyl-D-glucosamine(in) + L-histidyl-[protein]. It functions in the pathway cell wall biogenesis; peptidoglycan recycling. Its function is as follows. The phosphoenolpyruvate-dependent sugar phosphotransferase system (sugar PTS), a major carbohydrate active transport system, catalyzes the phosphorylation of incoming sugar substrates concomitantly with their translocation across the cell membrane. This system is involved in the uptake and phosphorylation of MurNAc-GlcNAc, the principle peptidoglycan turnover product of S.aureus, yielding cytoplasmic MurNAc 6P-GlcNAc. This Staphylococcus saprophyticus subsp. saprophyticus (strain ATCC 15305 / DSM 20229 / NCIMB 8711 / NCTC 7292 / S-41) protein is PTS system MurNAc-GlcNAc-specific EIIBC component.